The primary structure comprises 862 residues: Short transient receptor potential channel 7 (862 aa).

A disordered region spans residues 1 to 21; that stretch reads MLGSNTFKNMQRRHTTLREKG. Residues 1–351 are Cytoplasmic-facing; the sequence is MLGSNTFKNM…GLRQQSIAVK (351 aa). Basic residues predominate over residues 10–21; it reads MQRRHTTLREKG. T15 carries the post-translational modification Phosphothreonine; by PKG/PRKG1. ANK repeat units follow at residues 42-71, 77-106, 108-134, and 163-192; these read PEEE…TLNF, MGQN…LARV, DALL…FAQG, and HDIT…RIER. A helical transmembrane segment spans residues 352-372; sequence FLAVFGVSIGLPFLAIAYWIA. Residues 373 to 383 lie on the Extracellular side of the membrane; it reads PCSKLGQTLRS. A helical membrane pass occupies residues 384-404; it reads PFMKFVAHAVSFTIFLGLLVV. At 405 to 465 the chain is on the cytoplasmic side; it reads NASDRFEGVK…KEIWEEGPRE (61 aa). Residues 466–486 form a helical membrane-spanning segment; the sequence is YVLHLWNLLDFGMLSIFVASF. The Extracellular portion of the chain corresponds to 487 to 537; sequence TARFMAFLKASEAQLYVDQYVQDVTLHNVSLPPEVAYFTYARDKWWPSDPQ. N-linked (GlcNAc...) asparagine glycosylation is present at N514. Residues 538 to 558 form a helical membrane-spanning segment; the sequence is IISEGLYAIAVVLSFSRIAYI. The Cytoplasmic segment spans residues 559–581; sequence LPANESFGPLQISLGRTVKDIFK. The chain crosses the membrane as a helical span at residues 582–602; sequence FMVIFIMVFVAFMIGMFNLYS. Residues 603–651 lie on the Extracellular side of the membrane; sequence YYRGAKYNPAFTTVEESFKTLFWSIFGLSEVISVVLKYDHKFIENIGYV. The chain crosses the membrane as a helical span at residues 652–672; the sequence is LYGVYNVTMVVVLLNMLIAMI. Topologically, residues 673–862 are cytoplasmic; that stretch reads NNSYQEIEED…HLRVNQGKDI (190 aa).

It belongs to the transient receptor (TC 1.A.4) family. STrpC subfamily. TRPC7 sub-subfamily. In terms of assembly, interacts with MX1 and RNF24. Interacts (via ANK-repeat domains) with PRKG1. Phosphorylation by PRKG1 at Thr-15 negatively regulates TRPC7 activity.

Its subcellular location is the cell membrane. It is found in the nucleus envelope. The catalysed reaction is Ca(2+)(in) = Ca(2+)(out). Forms a receptor-activated non-selective calcium permeant cation channel. Probably is operated by a phosphatidylinositol second messenger system activated by receptor tyrosine kinases or G-protein coupled receptors. Activated by diacylglycerol (DAG). May also be activated by intracellular calcium store depletion. This is Short transient receptor potential channel 7 (Trpc7) from Mus musculus (Mouse).